Reading from the N-terminus, the 918-residue chain is Eukaryotic translation initiation factor 3 subunit C (918 aa).

Positions 1-174 (MSRFFKGGSS…EEEGRRVVKS (174 aa)) are disordered. Phosphoserine occurs at positions 10, 12, 16, 19, and 20. Acidic residues-rich tracts occupy residues 36-47 (SSSEEESSEEES), 54-67 (ESSE…ESEV), and 79-128 (EDSE…ESDE). Residue Thr667 is modified to Phosphothreonine. Positions 681-856 (FHMHINLELL…GAIIFERVEI (176 aa)) constitute a PCI domain. The segment at 879–918 (KLYEQKTQHTNPQENRRRDKGGSVKRRNERTENRNRSDMN) is disordered. Basic and acidic residues predominate over residues 907–918 (ERTENRNRSDMN).

It belongs to the eIF-3 subunit C family. As to quaternary structure, component of the eukaryotic translation initiation factor 3 (eIF-3) complex. The eIF-3 complex appears to include tif32/eif3a, SPAC25G10.08/eif3b, tif33/eif3c, SPBC4C3.07/eif3f, tif35/eif3g and sum1/eif3i. This set of common subunits may also associate exclusively with either moe1/eif3d and int6/eif3e, or with SPAC821.05/eif3h and SPAC1751.03/eif3m. The eIF-3 complex may also include SPAC3A12.13c/eif3j.

The protein localises to the cytoplasm. Its function is as follows. Component of the eukaryotic translation initiation factor 3 (eIF-3) complex, which is involved in protein synthesis of a specialized repertoire of mRNAs and, together with other initiation factors, stimulates binding of mRNA and methionyl-tRNAi to the 40S ribosome. The eIF-3 complex specifically targets and initiates translation of a subset of mRNAs involved in cell proliferation. The sequence is that of Eukaryotic translation initiation factor 3 subunit C (nip1) from Schizosaccharomyces pombe (strain 972 / ATCC 24843) (Fission yeast).